The sequence spans 403 residues: Phosphopentomutase (403 aa).

Residues Asp-13, Asp-298, His-303, Asp-339, His-340, and His-351 each coordinate Mn(2+).

It belongs to the phosphopentomutase family. Mn(2+) serves as cofactor.

It is found in the cytoplasm. The enzyme catalyses 2-deoxy-alpha-D-ribose 1-phosphate = 2-deoxy-D-ribose 5-phosphate. It catalyses the reaction alpha-D-ribose 1-phosphate = D-ribose 5-phosphate. Its pathway is carbohydrate degradation; 2-deoxy-D-ribose 1-phosphate degradation; D-glyceraldehyde 3-phosphate and acetaldehyde from 2-deoxy-alpha-D-ribose 1-phosphate: step 1/2. In terms of biological role, isomerase that catalyzes the conversion of deoxy-ribose 1-phosphate (dRib-1-P) and ribose 1-phosphate (Rib-1-P) to deoxy-ribose 5-phosphate (dRib-5-P) and ribose 5-phosphate (Rib-5-P), respectively. The polypeptide is Phosphopentomutase (Streptococcus thermophilus).